The sequence spans 165 residues: MTQVTFKHNPVTLVGTERKVGDKAPNFTVVNRDLEEVTLHDYDGKVRLISVVPSIDTSVCSTQTRKFNEEASNLDNTVVLTISVDLPFAQKKWCAAEGLPNAITLSDHRDLSFGEAYGVIMKELRLLARSVFVVNAKGEIVYTEVVPEGSDHPNYEAAIEAAKKA.

The Thioredoxin domain occupies 18–164; sequence RKVGDKAPNF…YEAAIEAAKK (147 aa). Catalysis depends on Cys-60, which acts as the Cysteine sulfenic acid (-SOH) intermediate. Cysteines 60 and 94 form a disulfide.

It belongs to the peroxiredoxin family. Tpx subfamily. In terms of assembly, homodimer.

The catalysed reaction is a hydroperoxide + [thioredoxin]-dithiol = an alcohol + [thioredoxin]-disulfide + H2O. Thiol-specific peroxidase that catalyzes the reduction of hydrogen peroxide and organic hydroperoxides to water and alcohols, respectively. Plays a role in cell protection against oxidative stress by detoxifying peroxides. In Listeria innocua serovar 6a (strain ATCC BAA-680 / CLIP 11262), this protein is Thiol peroxidase.